A 436-amino-acid chain; its full sequence is UPF0597 protein YhaM (436 aa).

The protein belongs to the UPF0597 family.

Functionally, thought to be a D-serine dehydratase, however it does not complement a dsdA (D-serine dehydratase) mutant in strain CFT073, suggesting it may not have that function. This is UPF0597 protein YhaM from Escherichia coli O157:H7.